Reading from the N-terminus, the 247-residue chain is Probable proteasome subunit alpha type-5 (247 aa).

Phosphothreonine is present on threonine 55.

Belongs to the peptidase T1A family. The 26S proteasome consists of a 20S proteasome core and two 19S regulatory subunits. The 20S proteasome core is composed of 28 subunits that are arranged in four stacked rings, resulting in a barrel-shaped structure. The two end rings are each formed by seven alpha subunits, and the two central rings are each formed by seven beta subunits. The catalytic chamber with the active sites is on the inside of the barrel.

The protein resides in the cytoplasm. Its subcellular location is the nucleus. Its function is as follows. The proteasome is a multicatalytic proteinase complex which is characterized by its ability to cleave peptides with Arg, Phe, Tyr, Leu, and Glu adjacent to the leaving group at neutral or slightly basic pH. The proteasome has an ATP-dependent proteolytic activity. This chain is Probable proteasome subunit alpha type-5 (pup2), found in Schizosaccharomyces pombe (strain 972 / ATCC 24843) (Fission yeast).